Consider the following 83-residue polypeptide: Small ribosomal subunit protein bS20 (83 aa).

The protein belongs to the bacterial ribosomal protein bS20 family.

Functionally, binds directly to 16S ribosomal RNA. This Flavobacterium johnsoniae (strain ATCC 17061 / DSM 2064 / JCM 8514 / BCRC 14874 / CCUG 350202 / NBRC 14942 / NCIMB 11054 / UW101) (Cytophaga johnsonae) protein is Small ribosomal subunit protein bS20.